Here is a 210-residue protein sequence, read N- to C-terminus: MSAALLSLVQWLSPAFPTGAFAYSHGLEWAISEGEVRDAASARRWIADVLAFGAGRTDAILLAHALRGHDPGALSDLARALAPAAERLRETEEQGAAFAATVAALTGRDLPPRPLPVALGQAAAPLGLPVAEVLALMLHAFAANLVSAAVRFVPLGQTEGQATLAALHPRIGEIAAESAEAPLDALGSAALRGDLAAMRHETQEVRIFKT.

This sequence belongs to the UreF family. As to quaternary structure, ureD, UreF and UreG form a complex that acts as a GTP-hydrolysis-dependent molecular chaperone, activating the urease apoprotein by helping to assemble the nickel containing metallocenter of UreC. The UreE protein probably delivers the nickel.

Its subcellular location is the cytoplasm. Required for maturation of urease via the functional incorporation of the urease nickel metallocenter. The sequence is that of Urease accessory protein UreF from Cereibacter sphaeroides (strain ATCC 17023 / DSM 158 / JCM 6121 / CCUG 31486 / LMG 2827 / NBRC 12203 / NCIMB 8253 / ATH 2.4.1.) (Rhodobacter sphaeroides).